A 397-amino-acid polypeptide reads, in one-letter code: Nuclear egress protein 2 (397 aa).

The Perinuclear space portion of the chain corresponds to 1–358 (MEMNKVLHQD…GPSRPQSGPW (358 aa)). Disordered regions lie at residues 205 to 245 (RTAG…PPPP) and 291 to 332 (AAAG…PSLE). Ser-216 carries the phosphoserine modification. Low complexity-rich tracts occupy residues 224-239 (PSCS…AAAG) and 291-301 (AAAGQDVGGSA). Positions 310-322 (SRRRGVSTHHRHP) are enriched in basic residues. The chain crosses the membrane as a helical span at residues 359–381 (LPARFATLGPLVLALLLVLALLW). Over 382-397 (RGHGQSSSPTRSAHRD) the chain is Nuclear.

The protein belongs to the herpesviridae NEC2 protein family. Forms a heterohexameric complex with NEC1. Interacts with host UBA7 and RNF170; this interaction promotes UBA7 proteasomal degradation. In terms of processing, phosphorylated. Phosphorylation by viral kinase UL97 at Ser-216 plays an important role for correct viral nuclear egress complex (NEC) localization.

The protein localises to the host nucleus inner membrane. Plays an essential role in virion nuclear egress, the first step of virion release from infected cell. Within the host nucleus, NEC1 interacts with the newly formed capsid through the vertexes and directs it to the inner nuclear membrane by associating with NEC2. Induces the budding of the capsid at the inner nuclear membrane as well as its envelopment into the perinuclear space. There, the NEC1/NEC2 complex promotes the fusion of the enveloped capsid with the outer nuclear membrane and the subsequent release of the viral capsid into the cytoplasm where it will reach the secondary budding sites in the host Golgi or trans-Golgi network. Inhibits host ISGylation and subsequent innate antiviral response by targeting host UBA7 for proteasomal degradation. This Human cytomegalovirus (strain AD169) (HHV-5) protein is Nuclear egress protein 2.